We begin with the raw amino-acid sequence, 230 residues long: Cytidylate kinase (230 aa).

12–20 contacts ATP; it reads GPSGAGKGT.

It belongs to the cytidylate kinase family. Type 1 subfamily.

It localises to the cytoplasm. It catalyses the reaction CMP + ATP = CDP + ADP. It carries out the reaction dCMP + ATP = dCDP + ADP. The protein is Cytidylate kinase of Shewanella putrefaciens (strain CN-32 / ATCC BAA-453).